A 308-amino-acid chain; its full sequence is 34.2 kDa protein in rubredoxin operon (308 aa).

A disulfide bridge connects residues Cys136 and Cys139. 268–278 provides a ligand contact to FAD; sequence TNIKGVFAAGD.

This sequence belongs to the class-II pyridine nucleotide-disulfide oxidoreductase family.

This is 34.2 kDa protein in rubredoxin operon from Clostridium pasteurianum.